The sequence spans 219 residues: 16S rRNA (adenine(1408)-N(1))-methyltransferase (219 aa).

S-adenosyl-L-methionine contacts are provided by residues Gly-32, Asn-38, Asp-55, 87-88, 104-109, and 195-197; these read AE, LFPWGT, and SLW.

The protein belongs to the methyltransferase superfamily. Kanamycin-apramycin resistance family.

The catalysed reaction is adenosine(1408) in 16S rRNA + S-adenosyl-L-methionine = N(1)-methyladenosine(1408) in 16S rRNA + S-adenosyl-L-homocysteine + H(+). In terms of biological role, specifically methylates the N(1) position of adenine 1408 in 16S rRNA. Confers resistance to various aminoglycosides, including kanamycin, neomycin, apramycin, ribostamycin and gentamicin. Methylates only fully assembled 30S subunits. The protein is 16S rRNA (adenine(1408)-N(1))-methyltransferase (npmA) of Escherichia coli.